We begin with the raw amino-acid sequence, 267 residues long: Tryptophan synthase alpha chain (267 aa).

Residues Glu-47 and Asp-58 each act as proton acceptor in the active site.

This sequence belongs to the TrpA family. As to quaternary structure, tetramer of two alpha and two beta chains.

The catalysed reaction is (1S,2R)-1-C-(indol-3-yl)glycerol 3-phosphate + L-serine = D-glyceraldehyde 3-phosphate + L-tryptophan + H2O. It participates in amino-acid biosynthesis; L-tryptophan biosynthesis; L-tryptophan from chorismate: step 5/5. Functionally, the alpha subunit is responsible for the aldol cleavage of indoleglycerol phosphate to indole and glyceraldehyde 3-phosphate. This chain is Tryptophan synthase alpha chain, found in Chlorobium limicola (strain DSM 245 / NBRC 103803 / 6330).